The sequence spans 177 residues: MLRRLVQQWSVLVFLLSYSVPSRGRSVEGLGRRLKRAVSEHQLLHDKGKSIQDLRRRFFLHHLIAEIHTAEIRATSEVSPNSKPAPNTKNHPVRFGSDDEGRYLTQETNKVETYKEQPLKTPGKKKKGKPGKRREQEKKKRRTRSAWPGTTGSGLLEDPQPHTSPTSTSLEPSSRTH.

Residues methionine 1 to glycine 24 form the signal peptide. Positions arginine 25–leucine 34 are excised as a propeptide. Residues arginine 57–histidine 68 form an important for receptor binding region. The interval alanine 74 to histidine 177 is disordered. A compositionally biased stretch (polar residues) spans serine 76 to asparagine 90. The Nuclear localization signal signature appears at threonine 108–lysine 129. The span at asparagine 109–proline 118 shows a compositional bias: basic and acidic residues. The span at proline 122–lysine 132 shows a compositional bias: basic residues. The segment covering proline 161–histidine 177 has biased composition (low complexity).

This sequence belongs to the parathyroid hormone family. In terms of assembly, PTHrP interacts with PTH1R (via N-terminal extracellular domain). There are several secretory forms, including osteostatin, arising from endoproteolytic cleavage of the initial translation product. Each of these secretory forms is believed to have one or more of its own receptors that mediates the normal paracrine, autocrine and endocrine actions.

It is found in the secreted. It localises to the cytoplasm. Its subcellular location is the nucleus. Its function is as follows. Neuroendocrine peptide which is a critical regulator of cellular and organ growth, development, migration, differentiation and survival and of epithelial calcium ion transport. Acts by binding to its receptor, PTH1R, activating G protein-coupled receptor signaling. Regulates endochondral bone development and epithelial-mesenchymal interactions during the formation of the mammary glands and teeth. Required for skeletal homeostasis. Promotes mammary mesenchyme differentiation and bud outgrowth by modulating mesenchymal cell responsiveness to BMPs. Up-regulates BMPR1A expression in the mammary mesenchyme and this increases the sensitivity of these cells to BMPs and allows them to respond to BMP4 in a paracrine and/or autocrine fashion. BMP4 signaling in the mesenchyme, in turn, triggers epithelial outgrowth and augments MSX2 expression, which causes the mammary mesenchyme to inhibit hair follicle formation within the nipple sheath. Potent inhibitor of osteoclastic bone resorption. The polypeptide is Parathyroid hormone-related protein (Pthlh) (Rattus norvegicus (Rat)).